A 353-amino-acid polypeptide reads, in one-letter code: Aliphatic aldoxime dehydratase (353 aa).

Ser219 serves as a coordination point for an aliphatic aldoxime. His299 serves as a coordination point for heme b. His320 contributes to the an aliphatic aldoxime binding site. Residue His320 is part of the active site.

The protein belongs to the heme-containing dehydratase family. As to quaternary structure, homodimer. It depends on heme b as a cofactor.

The enzyme catalyses an aliphatic aldoxime = a nitrile + H2O. Active when the heme iron is in the ferrous state. The activity is enhanced by reducing agents, such as Na(2)S, Na(2)S(2)(O4), 2-mercaptoethanol, and L-cysteine and supplementary additions of electron acceptors such as flavins, sulfite ion, and vitamin K3. The effect of various chemicals on the enzyme activity is different in the presence and absence of the reducing reagent, Na(2)S, which acts not only as a reductant but also changes the substrate specificity of the enzyme. Functionally, catalyzes the dehydration of aldoximes to their corresponding nitrile. Is active toward various arylalkyl- and alkyl-aldoximes, and to a lesser extent toward aryl-aldoximes. In Rhodococcus erythropolis (Arthrobacter picolinophilus), this protein is Aliphatic aldoxime dehydratase.